The primary structure comprises 102 residues: NADH-quinone oxidoreductase subunit K (102 aa).

Transmembrane regions (helical) follow at residues 6-26, 30-50, and 62-82; these read LEHGLIVATILFALGFYGVMV, LLFMLMSLEIMMNAAALAFVL, and VMFILILTLAAAEACIGLAIV.

It belongs to the complex I subunit 4L family. In terms of assembly, NDH-1 is composed of 14 different subunits. Subunits NuoA, H, J, K, L, M, N constitute the membrane sector of the complex.

The protein localises to the cell inner membrane. The enzyme catalyses a quinone + NADH + 5 H(+)(in) = a quinol + NAD(+) + 4 H(+)(out). Functionally, NDH-1 shuttles electrons from NADH, via FMN and iron-sulfur (Fe-S) centers, to quinones in the respiratory chain. The immediate electron acceptor for the enzyme in this species is believed to be ubiquinone. Couples the redox reaction to proton translocation (for every two electrons transferred, four hydrogen ions are translocated across the cytoplasmic membrane), and thus conserves the redox energy in a proton gradient. The polypeptide is NADH-quinone oxidoreductase subunit K (Acinetobacter baumannii (strain AB307-0294)).